A 388-amino-acid polypeptide reads, in one-letter code: 3beta-hydroxysteroid dehydrogenase dhs-16 (388 aa).

Residues 2 to 22 traverse the membrane as a helical segment; sequence LELIYILPLLCFVYFLFRRFV. Tyr188 functions as the Proton acceptor in the catalytic mechanism. The next 2 membrane-spanning stretches (helical) occupy residues 300 to 320 and 346 to 366; these read AIFMFIPLSIFPTALQDWILA and IQWIQFLSQIAIIPLLYTIFF.

This sequence belongs to the short-chain dehydrogenases/reductases (SDR) family. Strongly expressed in the hypodermis and posterior pharyngeal bulb and in a number of unidentified neurons of the head and tail.

The protein localises to the membrane. The enzyme catalyses lathosterol + NAD(+) = 5alpha-cholest-7-en-3-one + NADH + H(+). The protein operates within steroid hormone biosynthesis; dafachronic acid biosynthesis. 3beta-hydroxysteroid dehydrogenase that converts 3beta-hydroxysteroids to 3-ketosteroids, an essential step in the production of dafachronic acids from cholesterol. Catalyzes the dehydrogenation of lathosterol (5alpha-cholest-7-en-3beta-ol) to lathosterone (5alpha-cholest-7-en-3-one), a step required for maximal biosynthesis of Delta(7)-dafachronic acid. Dafachronic acids act as ligands and bind directly to the nuclear hormone receptor (NHR) daf-12, suppressing dauer formation and inducing reproductive growth, they can also regulate C.elegans lifespan. The chain is 3beta-hydroxysteroid dehydrogenase dhs-16 (dhs-16) from Caenorhabditis elegans.